An 880-amino-acid chain; its full sequence is Dynamin-like protein A (880 aa).

The disordered stretch occupies residues 1-124 (MSVFKKKDKS…QVELERKRRD (124 aa)). The segment covering 8 to 20 (DKSDDKKKKHDEE) has biased composition (basic and acidic residues). The span at 22 to 31 (PQGTFQPASQ) shows a compositional bias: polar residues. The segment covering 32 to 68 (STSNTNLNSLASSVNNGASVGSTNGSTPNNSNGSTPT) has biased composition (low complexity). Residues 69 to 152 (YNHNNSAEEL…NEQVEISSLE (84 aa)) adopt a coiled-coil conformation. Basic and acidic residues-rich tracts occupy residues 77-94 (ELEK…KSEL) and 103-124 (KKKE…KRRD). Positions 191 to 478 (AVSHPEIVFV…VWKSYQDTIP (288 aa)) constitute a Dynamin-type G domain. The tract at residues 201 to 208 (GPRSSGKS) is G1 motif. 201-208 (GPRSSGKS) lines the GTP pocket. Residues 227–240 (IVGVGGSNANGCSK) are G2 motif. A G3 motif region spans residues 315–318 (DSPG). Residues 315–319 (DSPGL) and 380–383 (TKFH) each bind GTP. Residues 380–383 (TKFH) are G4 motif. The tract at residues 413-416 (LPNH) is G5 motif. Positions 479-509 (RILKHLRSKRQTAEATLNELQKQSSSLDSTK) form a coiled coil. Over residues 532–543 (TSEGNPSANGQT) the composition is skewed to polar residues. The segment at 532–551 (TSEGNPSANGQTLDEEKSQQ) is disordered. Positions 824–861 (SNEQLEQLFEVQATREQLKQEEKKQQQILEKYSQIDEQ) form a coiled coil.

It belongs to the TRAFAC class dynamin-like GTPase superfamily. Dynamin/Fzo/YdjA family.

It is found in the cytoplasm. Its subcellular location is the cleavage furrow. It catalyses the reaction GTP + H2O = GDP + phosphate + H(+). Its function is as follows. Involved in cytokinesis. May hydrolyze GTP. The polypeptide is Dynamin-like protein A (dlpA) (Dictyostelium discoideum (Social amoeba)).